Consider the following 96-residue polypeptide: Putative pterin-4-alpha-carbinolamine dehydratase (96 aa).

It belongs to the pterin-4-alpha-carbinolamine dehydratase family.

It carries out the reaction (4aS,6R)-4a-hydroxy-L-erythro-5,6,7,8-tetrahydrobiopterin = (6R)-L-erythro-6,7-dihydrobiopterin + H2O. The protein is Putative pterin-4-alpha-carbinolamine dehydratase of Herpetosiphon aurantiacus (strain ATCC 23779 / DSM 785 / 114-95).